A 99-amino-acid chain; its full sequence is Large ribosomal subunit protein bL28 (99 aa).

Belongs to the bacterial ribosomal protein bL28 family.

This is Large ribosomal subunit protein bL28 from Rhodospirillum rubrum (strain ATCC 11170 / ATH 1.1.1 / DSM 467 / LMG 4362 / NCIMB 8255 / S1).